The primary structure comprises 500 residues: MAMMGQLWTNTGSALATLMFVYTIFKQFFPLFGPQLEPFLYRLFGRFYPYIQITFHEYSGEHFKRSEAYLGIQSYLSKDSSARAKKLKANTTKGSKSIVLSMDDKEEITDDFEGIRVWWQSKKEGATRQSFSFYPEANEKRYYMLRFHRRDREVIIERYLEHVMREGKTIEQKNRERKLYSNTPGQSHGNNSKWSHVTFEHPATFDTLAMEENKKEEIKSDLIKFSKSKDYYKKIGKAWKRGYLLFGPPGTGKSTMIAAMANFLEYDVYDLELTTVKDNTHLRRLLIETSAKSIIVIEDIDCSLNLTGQRKKKEEEEEDGDDKNTIEKKMMMKNEGENKESKVTLSGLLNFIDGLWSACGGERIIVFTTNFVDKLDPALIRKGRMDKHIEMSYCCFEAFKVLAKNYLDVEESEMFEEIKRLLEVEEIKMTPADVGENLLPKSEKEGGETCLKRLIEALKEEKEEAKKKVEEEEEEKQRKKEKVKEIEAEKEKKKKIEEEN.

A helical transmembrane segment spans residues 7–29 (LWTNTGSALATLMFVYTIFKQFF). The tract at residues 174 to 193 (NRERKLYSNTPGQSHGNNSK) is disordered. A compositionally biased stretch (polar residues) spans 180–193 (YSNTPGQSHGNNSK). ATP is bound at residue 247-254 (GPPGTGKS). A disordered region spans residues 462 to 500 (KEEAKKKVEEEEEEKQRKKEKVKEIEAEKEKKKKIEEEN).

This sequence belongs to the AAA ATPase family. BCS1 subfamily. The cofactor is Mg(2+).

The protein resides in the membrane. The enzyme catalyses ATP + H2O = ADP + phosphate + H(+). The polypeptide is AAA-ATPase At3g28580 (Arabidopsis thaliana (Mouse-ear cress)).